The primary structure comprises 32 residues: Alpha-amylase inhibitor AAI (32 aa).

Intrachain disulfides connect Cys-1–Cys-18, Cys-8–Cys-23, and Cys-17–Cys-31.

Endosperm.

Its function is as follows. Alpha-amylase inhibitor. It is active against alpha-amylases from Tribolium castaneum and Prostephanus truncatus larvae. The polypeptide is Alpha-amylase inhibitor AAI (AAI) (Amaranthus hypochondriacus (Prince-of-Wales feather)).